We begin with the raw amino-acid sequence, 460 residues long: Cobyrinate a,c-diamide synthase (460 aa).

Residues 248–440 form the GATase cobBQ-type domain; it reads KIAVARDAAF…THFHFGSSTK (193 aa). The active-site Nucleophile is the cysteine 331.

Belongs to the CobB/CbiA family. Mg(2+) serves as cofactor.

The enzyme catalyses cob(II)yrinate + 2 L-glutamine + 2 ATP + 2 H2O = cob(II)yrinate a,c diamide + 2 L-glutamate + 2 ADP + 2 phosphate + 2 H(+). Its pathway is cofactor biosynthesis; adenosylcobalamin biosynthesis; cob(II)yrinate a,c-diamide from sirohydrochlorin (anaerobic route): step 10/10. Catalyzes the ATP-dependent amidation of the two carboxylate groups at positions a and c of cobyrinate, using either L-glutamine or ammonia as the nitrogen source. The protein is Cobyrinate a,c-diamide synthase of Priestia megaterium (Bacillus megaterium).